A 321-amino-acid chain; its full sequence is Lipoyl synthase (321 aa).

Residues C68, C73, C79, C94, C98, C101, and S308 each coordinate [4Fe-4S] cluster. The 218-residue stretch at 80–297 (FNHGTATFMI…KEIALELGFT (218 aa)) folds into the Radical SAM core domain.

Belongs to the radical SAM superfamily. Lipoyl synthase family. It depends on [4Fe-4S] cluster as a cofactor.

Its subcellular location is the cytoplasm. The catalysed reaction is [[Fe-S] cluster scaffold protein carrying a second [4Fe-4S](2+) cluster] + N(6)-octanoyl-L-lysyl-[protein] + 2 oxidized [2Fe-2S]-[ferredoxin] + 2 S-adenosyl-L-methionine + 4 H(+) = [[Fe-S] cluster scaffold protein] + N(6)-[(R)-dihydrolipoyl]-L-lysyl-[protein] + 4 Fe(3+) + 2 hydrogen sulfide + 2 5'-deoxyadenosine + 2 L-methionine + 2 reduced [2Fe-2S]-[ferredoxin]. Its pathway is protein modification; protein lipoylation via endogenous pathway; protein N(6)-(lipoyl)lysine from octanoyl-[acyl-carrier-protein]: step 2/2. Its function is as follows. Catalyzes the radical-mediated insertion of two sulfur atoms into the C-6 and C-8 positions of the octanoyl moiety bound to the lipoyl domains of lipoate-dependent enzymes, thereby converting the octanoylated domains into lipoylated derivatives. In Vibrio campbellii (strain ATCC BAA-1116), this protein is Lipoyl synthase.